Consider the following 190-residue polypeptide: Nuclear transcription factor Y subunit A-7 (190 aa).

A disordered region spans residues 1-33 (MTSSIHELSDNIGSHEKQEQRDSHFQPPIPSAR). Residues 7–24 (ELSDNIGSHEKQEQRDSH) are compositionally biased toward basic and acidic residues. The Subunit association domain (SAD) motif lies at 103 to 126 (FVNAKQYHGILRRRQSRARLESQN). The segment at residues 133-158 (KPYLHESRHLHAIRRPRGCGGRFLNA) is a DNA-binding region (NFYA/HAP2-type). The tract at residues 147–190 (RPRGCGGRFLNAKKEDEHHEDSSHEEKSNLSAGKSAMAASSGTS) is disordered. Residues 158–174 (AKKEDEHHEDSSHEEKS) show a composition bias toward basic and acidic residues. Low complexity predominate over residues 177–190 (SAGKSAMAASSGTS).

It belongs to the NFYA/HAP2 subunit family. As to quaternary structure, heterotrimeric transcription factor composed of three components, NF-YA, NF-YB and NF-YC. NF-YB and NF-YC must interact and dimerize for NF-YA association and DNA binding.

The protein resides in the nucleus. Its function is as follows. Stimulates the transcription of various genes by recognizing and binding to a CCAAT motif in promoters. In Arabidopsis thaliana (Mouse-ear cress), this protein is Nuclear transcription factor Y subunit A-7 (NFYA7).